The primary structure comprises 1969 residues: Protein mono-ADP-ribosyltransferase PARP4 (1969 aa).

Positions methionine 1 to proline 94 constitute a BRCT domain. A Nuclear localization signal motif is present at residues proline 19 to lysine 25. Residues tyrosine 92 to valine 132 form a disordered region. The 129-residue stretch at serine 235–proline 363 folds into the PARP alpha-helical domain. In terms of domain architecture, PARP catalytic spans proline 362 to glutamate 566. Residues threonine 600 to threonine 728 form the VIT domain. The region spanning glutamate 869–isoleucine 1039 is the VWFA domain. Serine 1229 bears the Phosphoserine mark. The short motif at aspartate 1230–serine 1242 is the Nuclear localization signal element. 5 stretches are compositionally biased toward pro residues: residues proline 1372 to leucine 1387, histidine 1402 to serine 1417, leucine 1425 to proline 1444, leucine 1485 to serine 1513, and leucine 1521 to proline 1540. The disordered stretch occupies residues proline 1372–isoleucine 1608. Positions isoleucine 1443–glycine 1541 constitute an FH1 domain. A compositionally biased stretch (low complexity) spans glycine 1541–histidine 1556. Residues leucine 1557–serine 1585 are compositionally biased toward pro residues. The tract at residues phenylalanine 1808–glycine 1969 is interaction with the major vault protein.

Belongs to the ARTD/PARP family. In terms of assembly, component of the vault ribonucleoprotein particle, at least composed of MVP, PARP4 and one or more vault RNAs (vRNAs). Interacts with TEP1.

It is found in the cytoplasm. The protein resides in the nucleus. The catalysed reaction is L-aspartyl-[protein] + NAD(+) = 4-O-(ADP-D-ribosyl)-L-aspartyl-[protein] + nicotinamide. It carries out the reaction L-glutamyl-[protein] + NAD(+) = 5-O-(ADP-D-ribosyl)-L-glutamyl-[protein] + nicotinamide. Its function is as follows. Mono-ADP-ribosyltransferase that mediates mono-ADP-ribosylation of target proteins. In Mus musculus (Mouse), this protein is Protein mono-ADP-ribosyltransferase PARP4.